The following is a 280-amino-acid chain: uncharacterized protein (280 aa).

An N-terminal signal peptide occupies residues 1 to 21 (MRPAIKVGLSTASVYPLRAEA).

This sequence to M.leprae ML2432 and S.coelicolor SCO3347.

This is an uncharacterized protein from Mycobacterium tuberculosis (strain CDC 1551 / Oshkosh).